A 221-amino-acid polypeptide reads, in one-letter code: Ribonuclease T (221 aa).

The 175-residue stretch at 20–194 (VVIDIETAGF…YDTLQTANLF (175 aa)) folds into the Exonuclease domain. Mg(2+) contacts are provided by Asp-23, Glu-25, His-181, and Asp-186. His-181 (proton donor/acceptor) is an active-site residue.

It belongs to the RNase T family. In terms of assembly, homodimer. It depends on Mg(2+) as a cofactor.

Functionally, trims short 3' overhangs of a variety of RNA species, leaving a one or two nucleotide 3' overhang. Responsible for the end-turnover of tRNA: specifically removes the terminal AMP residue from uncharged tRNA (tRNA-C-C-A). Also appears to be involved in tRNA biosynthesis. The chain is Ribonuclease T from Buchnera aphidicola subsp. Acyrthosiphon pisum (strain APS) (Acyrthosiphon pisum symbiotic bacterium).